Consider the following 426-residue polypeptide: MESLTLQPIELISGEVNLPGSKSVSNRALLLAALASGTTRLTNLLDSDDIRHMLNALTKLGVNYRLSADKTTCEVEGLGQAFHTTQPLELFLGNAGTAMRPLAAALCLGQGDYVLTGEPRMKERPIGHLVDALRQASAQIEYLEQENFPPLRIQGTGLQAGTVTIDGSISSQFLTAFLMSAPLAQGKVTIKIVGELVSKPYIDITLHIMEQFGVQVINHDYQEFVIPAGQSYVSPGQFLVEGDASSASYFLAAAAIKGGEVKVTGIGKNSIQGDIQFADALEKMGAQIEWGDDYVIARRGELNAVDLDFNHIPDAAMTIATTALFAKGTTAIRNVYNWRVKETDRLAAMATELRKVGATVEEGEDFIVITPPTKLIHAAIDTYDDHRMAMCFSLVALSDTPVTINDPKCTSKTFPDYFDKFAQLSR.

Residues lysine 22, serine 23, and arginine 27 each coordinate 3-phosphoshikimate. Lysine 22 serves as a coordination point for phosphoenolpyruvate. Phosphoenolpyruvate-binding residues include glycine 96 and arginine 124. Positions 170, 171, 172, 198, 314, 337, and 341 each coordinate 3-phosphoshikimate. A phosphoenolpyruvate-binding site is contributed by glutamine 172. The active-site Proton acceptor is aspartate 314. Residues arginine 345, arginine 387, and lysine 412 each coordinate phosphoenolpyruvate.

It belongs to the EPSP synthase family. As to quaternary structure, monomer.

It is found in the cytoplasm. It carries out the reaction 3-phosphoshikimate + phosphoenolpyruvate = 5-O-(1-carboxyvinyl)-3-phosphoshikimate + phosphate. Its pathway is metabolic intermediate biosynthesis; chorismate biosynthesis; chorismate from D-erythrose 4-phosphate and phosphoenolpyruvate: step 6/7. Catalyzes the transfer of the enolpyruvyl moiety of phosphoenolpyruvate (PEP) to the 5-hydroxyl of shikimate-3-phosphate (S3P) to produce enolpyruvyl shikimate-3-phosphate and inorganic phosphate. The polypeptide is 3-phosphoshikimate 1-carboxyvinyltransferase (Vibrio cholerae serotype O1 (strain ATCC 39541 / Classical Ogawa 395 / O395)).